A 572-amino-acid polypeptide reads, in one-letter code: Enolase 4 (572 aa).

The disordered stretch occupies residues 181–204 (IEPVPSPVTSPALGKKKGSGKGKK). Residues 194–204 (GKKKGSGKGKK) show a composition bias toward basic residues. E288 contacts substrate. K468 serves as the catalytic Proton acceptor. K519 provides a ligand contact to substrate.

Belongs to the enolase family.

It carries out the reaction (2R)-2-phosphoglycerate = phosphoenolpyruvate + H2O. It participates in carbohydrate degradation; glycolysis; pyruvate from D-glyceraldehyde 3-phosphate: step 4/5. The protein is Enolase 4 (eno4) of Xenopus laevis (African clawed frog).